The sequence spans 342 residues: Transcriptional regulator of the unfolded protein response hacA (342 aa).

The interval 1-105 (MEDNFASVVE…TSRERKRLEM (105 aa)) is disordered. 2 stretches are compositionally biased toward basic and acidic residues: residues 35 to 48 (PETKVQETKTEEKK) and 74 to 88 (KTEDEKEQRRIERVL). The bZIP domain occupies 80–143 (EQRRIERVLR…NRLSQQLAQL (64 aa)). The segment at 82 to 135 (RRIERVLRNRAAAQTSRERKRLEMEKLENEKIQMEQQNQFLLQRLSQMEAENNR) is basic motif. The tract at residues 136-143 (LSQQLAQL) is leucine-zipper. 2 disordered regions span residues 146 to 167 (EVRNSRNSTPKPGSPATASPTL) and 306 to 330 (EPAHGLPNETPYQTSGLQPSLGAST). Positions 315–330 (TPYQTSGLQPSLGAST) are enriched in polar residues.

The protein belongs to the bZIP family.

It localises to the nucleus. Functionally, master transcriptional regulator of the unfolded protein response (UPR) that recognizes and binds to the UPR element (UPRE) in the promoter of UPR-regulated genes. In the canonical UPR pathway, the ireA RNase splices the cytoplasmic mRNA hacA, which alters the reading frame to allow translation of the bZIP transcription factor hacA. Induces the expression of pmrA, scrA and spfA in response to UPR. The polypeptide is Transcriptional regulator of the unfolded protein response hacA (Aspergillus fumigatus (strain ATCC MYA-4609 / CBS 101355 / FGSC A1100 / Af293) (Neosartorya fumigata)).